Reading from the N-terminus, the 485-residue chain is Probable serine/threonine-protein kinase nek1 (485 aa).

A Protein kinase domain is found at 12–283 (YLIKSQIGSG…TQQILEQVFI (272 aa)). ATP-binding positions include 18–26 (IGSGSYGNT) and Lys-41. Asp-136 acts as the Proton acceptor in catalysis. Polar residues predominate over residues 354-365 (KNQQQQSPQKLE). The segment at 354 to 419 (KNQQQQSPQK…NNDKNNNINN (66 aa)) is disordered. The span at 366–419 (NNNNNNNDNNNNNNNNNNNNNNNNNNNNNNNNNNNNNNNNNNNNNNDKNNNINN) shows a compositional bias: low complexity.

Belongs to the protein kinase superfamily. NEK Ser/Thr protein kinase family. NIMA subfamily.

The enzyme catalyses L-seryl-[protein] + ATP = O-phospho-L-seryl-[protein] + ADP + H(+). It catalyses the reaction L-threonyl-[protein] + ATP = O-phospho-L-threonyl-[protein] + ADP + H(+). This Dictyostelium discoideum (Social amoeba) protein is Probable serine/threonine-protein kinase nek1 (nek1).